We begin with the raw amino-acid sequence, 232 residues long: Uracil phosphoribosyltransferase (232 aa).

38 to 42 serves as a coordination point for GTP; the sequence is KGLVR. 5-phospho-alpha-D-ribose 1-diphosphate-binding positions include Arg87, Arg112, and 140-148; that span reads DPMIATGST. Uracil-binding positions include Ile204 and 209-211; that span reads GDA. Asp210 serves as a coordination point for 5-phospho-alpha-D-ribose 1-diphosphate.

The protein belongs to the UPRTase family. Requires Mg(2+) as cofactor.

It carries out the reaction UMP + diphosphate = 5-phospho-alpha-D-ribose 1-diphosphate + uracil. It participates in pyrimidine metabolism; UMP biosynthesis via salvage pathway; UMP from uracil: step 1/1. Allosterically activated by GTP. Functionally, catalyzes the conversion of uracil and 5-phospho-alpha-D-ribose 1-diphosphate (PRPP) to UMP and diphosphate. The protein is Uracil phosphoribosyltransferase of Methanococcus vannielii (strain ATCC 35089 / DSM 1224 / JCM 13029 / OCM 148 / SB).